Reading from the N-terminus, the 165-residue chain is Xanthine-guanine phosphoribosyltransferase (165 aa).

5-phospho-alpha-D-ribose 1-diphosphate-binding positions include 41–42 and 98–106; these read RG and DDLTDTGKT. Residue D99 participates in Mg(2+) binding. D102 and I145 together coordinate guanine. Xanthine-binding residues include D102 and I145. GMP-binding positions include 102-106 and 144-145; these read DTGKT and WI.

This sequence belongs to the purine/pyrimidine phosphoribosyltransferase family. XGPT subfamily. Homotetramer. The cofactor is Mg(2+).

The protein resides in the cell inner membrane. The catalysed reaction is GMP + diphosphate = guanine + 5-phospho-alpha-D-ribose 1-diphosphate. The enzyme catalyses XMP + diphosphate = xanthine + 5-phospho-alpha-D-ribose 1-diphosphate. It catalyses the reaction IMP + diphosphate = hypoxanthine + 5-phospho-alpha-D-ribose 1-diphosphate. The protein operates within purine metabolism; GMP biosynthesis via salvage pathway; GMP from guanine: step 1/1. It participates in purine metabolism; XMP biosynthesis via salvage pathway; XMP from xanthine: step 1/1. Functionally, purine salvage pathway enzyme that catalyzes the transfer of the ribosyl-5-phosphate group from 5-phospho-alpha-D-ribose 1-diphosphate (PRPP) to the N9 position of the 6-oxopurines guanine and xanthine to form the corresponding ribonucleotides GMP (guanosine 5'-monophosphate) and XMP (xanthosine 5'-monophosphate), with the release of PPi. To a lesser extent, also acts on hypoxanthine. This Sinorhizobium medicae (strain WSM419) (Ensifer medicae) protein is Xanthine-guanine phosphoribosyltransferase.